Consider the following 578-residue polypeptide: Proline--tRNA ligase (578 aa).

It belongs to the class-II aminoacyl-tRNA synthetase family. ProS type 1 subfamily. In terms of assembly, homodimer.

It localises to the cytoplasm. The enzyme catalyses tRNA(Pro) + L-proline + ATP = L-prolyl-tRNA(Pro) + AMP + diphosphate. In terms of biological role, catalyzes the attachment of proline to tRNA(Pro) in a two-step reaction: proline is first activated by ATP to form Pro-AMP and then transferred to the acceptor end of tRNA(Pro). As ProRS can inadvertently accommodate and process non-cognate amino acids such as alanine and cysteine, to avoid such errors it has two additional distinct editing activities against alanine. One activity is designated as 'pretransfer' editing and involves the tRNA(Pro)-independent hydrolysis of activated Ala-AMP. The other activity is designated 'posttransfer' editing and involves deacylation of mischarged Ala-tRNA(Pro). The misacylated Cys-tRNA(Pro) is not edited by ProRS. In Syntrophus aciditrophicus (strain SB), this protein is Proline--tRNA ligase.